A 289-amino-acid polypeptide reads, in one-letter code: Putative transmembrane protein ORF111 (289 aa).

5 consecutive transmembrane segments (helical) span residues 1–21 (MIGP…IFML), 112–132 (AIIT…VCIA), 151–171 (IGIT…FIVI), 189–209 (LNIS…TSIL), and 261–281 (YLLT…IGVG).

The protein resides in the host membrane. The chain is Putative transmembrane protein ORF111 from Ostreid herpesvirus 1 (isolate France) (OsHV-1).